The chain runs to 287 residues: Sulfofructosephosphate aldolase (287 aa).

The active-site Proton donor is Asp82. Residues His83 and His180 each coordinate Zn(2+). Residue Gly181 coordinates dihydroxyacetone phosphate. Residue His208 coordinates Zn(2+). Residues 209 to 211 (GGS) and 230 to 233 (NVDT) each bind dihydroxyacetone phosphate.

This sequence belongs to the class II fructose-bisphosphate aldolase family. Requires Zn(2+) as cofactor.

It catalyses the reaction 6-deoxy-6-sulfo-D-fructose 1-phosphate = (2S)-3-sulfolactaldehyde + dihydroxyacetone phosphate. In terms of biological role, part of the sulfo-EMP2 pathway, a D-sulfoquinovose degradation pathway that produces sulfolactate (SL). Cleaves 6-deoxy-6-sulfo-D-fructose 1-phosphate (SFP) to form dihydroxyacetone phosphate (DHAP) and 3-sulfolactaldehyde (SLA). In Alkalicoccus urumqiensis (Bacillus urumqiensis), this protein is Sulfofructosephosphate aldolase.